A 272-amino-acid polypeptide reads, in one-letter code: ATP phosphoribosyltransferase regulatory subunit (272 aa).

It belongs to the class-II aminoacyl-tRNA synthetase family. HisZ subfamily. Heteromultimer composed of HisG and HisZ subunits.

The protein localises to the cytoplasm. Its pathway is amino-acid biosynthesis; L-histidine biosynthesis; L-histidine from 5-phospho-alpha-D-ribose 1-diphosphate: step 1/9. In terms of biological role, required for the first step of histidine biosynthesis. May allow the feedback regulation of ATP phosphoribosyltransferase activity by histidine. This chain is ATP phosphoribosyltransferase regulatory subunit, found in Staphylococcus aureus (strain bovine RF122 / ET3-1).